The sequence spans 1181 residues: Sodium/potassium/calcium exchanger 1 (1181 aa).

At 1-419 (MGKLIRMGTQ…DLFSVEDRRQ (419 aa)) the chain is on the extracellular side. 3 disordered regions span residues 107–232 (AMED…TSLK), 255–276 (SLVG…STTP), and 300–323 (STPA…GTST). The segment covering 124–136 (SLKNNYSPTTAGT) has biased composition (polar residues). Asparagine 271 is a glycosylation site (N-linked (GlcNAc...) asparagine). A compositionally biased stretch (polar residues) spans 301-311 (TPATTEGSTAA). A helical membrane pass occupies residues 420–440 (GWVVLHIFGMTYVFVALAIVC). Topologically, residues 441-464 (DEYFVPALGVITDKLQISEDVAGA) are cytoplasmic. Residues 461–501 (VAGATFMAAGGSAPELFTSLIGVFISHSNVGIGTIVGSAVF) form an Alpha-1 repeat. The helical transmembrane segment at 465–485 (TFMAAGGSAPELFTSLIGVFI) threads the bilayer. Residues 486–491 (SHSNVG) are Extracellular-facing. Residues 492–512 (IGTIVGSAVFNILFVIGTCAL) form a helical membrane-spanning segment. The Cytoplasmic portion of the chain corresponds to 513 to 519 (FSREILN). Residues 520 to 544 (LTWWPLFRDVSFYILDLSMLIVFFL) traverse the membrane as a helical segment. The Extracellular portion of the chain corresponds to 545 to 552 (DSLIAWWE). The helical transmembrane segment at 553–569 (SLLLLLAYALYVFTMKW) threads the bilayer. Residues 570 to 989 (NKQIERWVKE…SLEWPESRQK (420 aa)) are Cytoplasmic-facing. The tract at residues 598–617 (PSDGAIEENEQQDNKKLKLP) is disordered. Serine 625 carries the post-translational modification Phosphoserine. The interval 650 to 983 (GEARPSKDKQ…ESEEPLSLEW (334 aa)) is disordered. At threonine 690 the chain carries Phosphothreonine. Residues 701-715 (GDQEEDPGCQEDVDE) are compositionally biased toward acidic residues. 14 repeat units span residues 730–741 (ETEAEGKKDEEG), 742–754 (ETEA…GQEE), 755–766 (ETETKGKEKQEG), 767–778 (ETESEGKDEQEG), 779–791 (ETEA…DHEG), 792–804 (ETEA…EHEG), 805–817 (ETEA…EQEG), 818–830 (ETEA…EQEG), 831–843 (ETEA…EHEV), 844–856 (ETEA…NHEG), 857–869 (ETEA…DHEG), 870–881 (ETEAEGNVEHQG), 882–893 (ETEAEGKVEHEG), and 894–905 (ETEAGEKDEHEG). 3 stretches are compositionally biased toward basic and acidic residues: residues 730-750 (ETEA…RKED), 757-775 (ETKG…GKDE), and 782-805 (AEGK…HEGE). Residues 730–905 (ETEAEGKKDE…EAGEKDEHEG (176 aa)) form a 14 X approximate tandem repeats region. The span at 806–820 (TEAEGTEDEQEGETE) shows a compositional bias: acidic residues. A compositionally biased stretch (basic and acidic residues) spans 834-906 (AEGKEVEHEV…AGEKDEHEGQ (73 aa)). Acidic residues-rich tracts occupy residues 921-931 (GEAEANAEDQC) and 949-979 (GDSE…EEPL). A helical membrane pass occupies residues 990–1010 (QAIYLFLLPIVFPLWLTIPDV). Over 1011–1017 (RRQEARK) the chain is Extracellular. The helical transmembrane segment at 1018-1038 (FFVITFLGSIIWIAMFSYLMV) threads the bilayer. The Cytoplasmic segment spans residues 1039 to 1053 (WWAHQVGETIGISEE). A helical membrane pass occupies residues 1054–1074 (IMGLTILAAGTSIPDLITSVI). The stretch at 1061–1092 (AAGTSIPDLITSVIVARKGLGDMAVSSSVGSN) is one Alpha-2 repeat. The Extracellular portion of the chain corresponds to 1075–1092 (VARKGLGDMAVSSSVGSN). Residues 1093–1113 (IFDITVGLPVPWLLFSLINAL) traverse the membrane as a helical segment. Residues 1114-1121 (QPIPVSSN) are Cytoplasmic-facing. The helical transmembrane segment at 1122-1142 (GLFCAIVLLFLMLLFVIFSIA) threads the bilayer. At 1143-1150 (SCKWRMNK) the chain is on the extracellular side. Residues 1151-1171 (ILGFTMFLLYFVFLVISVMLE) traverse the membrane as a helical segment. The Cytoplasmic segment spans residues 1172-1181 (DRIISCPVSV).

The protein belongs to the Ca(2+):cation antiporter (CaCA) (TC 2.A.19) family. SLC24A subfamily. Post-translationally, the uncleaved signal sequence is required for efficient membrane targeting and proper membrane integration and topology. Highly expressed in the eye.

It localises to the cell membrane. The enzyme catalyses Ca(2+)(out) + K(+)(out) + 4 Na(+)(in) = Ca(2+)(in) + K(+)(in) + 4 Na(+)(out). In terms of biological role, calcium, potassium:sodium antiporter that transports 1 Ca(2+) and 1 K(+) in exchange for 4 Na(+). Critical component of the visual transduction cascade, controlling the calcium concentration of outer segments during light and darkness. Light causes a rapid lowering of cytosolic free calcium in the outer segment of both retinal rod and cone photoreceptors and the light-induced lowering of calcium is caused by extrusion via this protein which plays a key role in the process of light adaptation. The sequence is that of Sodium/potassium/calcium exchanger 1 (Slc24a1) from Rattus norvegicus (Rat).